A 149-amino-acid chain; its full sequence is MKKDTTPKFHKLHVKTGDTVQIIAGKDKGKVGEVIKALPQLSKVVVKGVNIKTKQIIAGKDKGKVGEVIKALPQLSKVVVKGVNIKTKHVKPQQEGESGRIVTQEAPIHSSNVMLYSTKQNVASRVCYTFTAEGKKVRKLKKTGEILDN.

It belongs to the universal ribosomal protein uL24 family. As to quaternary structure, part of the 50S ribosomal subunit.

Its function is as follows. One of two assembly initiator proteins, it binds directly to the 5'-end of the 23S rRNA, where it nucleates assembly of the 50S subunit. Functionally, one of the proteins that surrounds the polypeptide exit tunnel on the outside of the subunit. This Nostoc sp. (strain PCC 7120 / SAG 25.82 / UTEX 2576) protein is Large ribosomal subunit protein uL24.